The following is a 329-amino-acid chain: NADH-quinone oxidoreductase subunit H (329 aa).

9 consecutive transmembrane segments (helical) span residues 9–29 (LIKILILVAVFSALGGFATYI), 42–62 (GPSYVGPFGLLQVAADGIKLF), 75–95 (LIFTLAPIIAMVSAFVSMAPI), 117–137 (IGFLFFLAVGAAGIYAPILAG), 154–174 (IQLLSFEVVSTLTILAPLMVV), 188–208 (GGFLDWLVFKQPLAFILFLIA), 238–258 (LKWGMFFLAEYAHLFAFSFVI), 269–291 (WGFIPGGIAILIKVSFFVFLSMW), and 309–329 (WKIMLPLALLNIVLTGVIILI).

The protein belongs to the complex I subunit 1 family. As to quaternary structure, NDH-1 is composed of 14 different subunits. Subunits NuoA, H, J, K, L, M, N constitute the membrane sector of the complex.

It localises to the cell inner membrane. It catalyses the reaction a quinone + NADH + 5 H(+)(in) = a quinol + NAD(+) + 4 H(+)(out). NDH-1 shuttles electrons from NADH, via FMN and iron-sulfur (Fe-S) centers, to quinones in the respiratory chain. The immediate electron acceptor for the enzyme in this species is believed to be ubiquinone. Couples the redox reaction to proton translocation (for every two electrons transferred, four hydrogen ions are translocated across the cytoplasmic membrane), and thus conserves the redox energy in a proton gradient. This subunit may bind ubiquinone. The sequence is that of NADH-quinone oxidoreductase subunit H from Helicobacter acinonychis (strain Sheeba).